A 563-amino-acid polypeptide reads, in one-letter code: Endogenous retroviral envelope protein HEMO (563 aa).

Positions M1 to H26 are cleaved as a signal peptide. Over L27–R488 the chain is Extracellular. 2 N-linked (GlcNAc...) asparagine glycosylation sites follow: N122 and N192. A helical membrane pass occupies residues S489–V509. The Cytoplasmic portion of the chain corresponds to R510–L563.

Belongs to the gamma type-C retroviral envelope protein family. N-glycosylated. In terms of processing, cleaved by some metalloproteinase at 432-Gln-Arg-433 (mainly) or 433-Arg-Gln-434, leading to release the secreted form (Endogenous retroviral envelope protein HEMO, secreted form) in the extracellular medium. Expressed at high level in the placenta and stem cells (at protein level). Also expressed in the kidney but at a lower level. Endogenous retroviral envelope protein HEMO, secreted form: Present in the blood of pregnant women (at protein level).

The protein resides in the cell membrane. The protein localises to the secreted. Functionally, endogenous envelope proteins originate from retroviral envelope proteins, which mediate receptor recognition and membrane fusion during early infection. Endogenous envelope proteins may have kept, lost or modified their original function during evolution. This is Endogenous retroviral envelope protein HEMO from Homo sapiens (Human).